An 892-amino-acid chain; its full sequence is Alanine--tRNA ligase (892 aa).

The Zn(2+) site is built by His-574, His-578, Cys-676, and His-680.

Belongs to the class-II aminoacyl-tRNA synthetase family. Requires Zn(2+) as cofactor.

The protein resides in the cytoplasm. It catalyses the reaction tRNA(Ala) + L-alanine + ATP = L-alanyl-tRNA(Ala) + AMP + diphosphate. In terms of biological role, catalyzes the attachment of alanine to tRNA(Ala) in a two-step reaction: alanine is first activated by ATP to form Ala-AMP and then transferred to the acceptor end of tRNA(Ala). Also edits incorrectly charged Ser-tRNA(Ala) and Gly-tRNA(Ala) via its editing domain. The chain is Alanine--tRNA ligase from Prochlorococcus marinus (strain SARG / CCMP1375 / SS120).